A 307-amino-acid polypeptide reads, in one-letter code: Elongation factor Ts (307 aa).

An involved in Mg(2+) ion dislocation from EF-Tu region spans residues 80-83 (TDFV).

Belongs to the EF-Ts family.

The protein localises to the cytoplasm. Its function is as follows. Associates with the EF-Tu.GDP complex and induces the exchange of GDP to GTP. It remains bound to the aminoacyl-tRNA.EF-Tu.GTP complex up to the GTP hydrolysis stage on the ribosome. This is Elongation factor Ts from Methylobacterium nodulans (strain LMG 21967 / CNCM I-2342 / ORS 2060).